Reading from the N-terminus, the 304-residue chain is MSEKNLLTALSKMITEQRNPNSMNIDQLSALELVKVINQEDKQVPLAVEKCLAQIAQAVEKIVQAFQNGGRLVYIGAGTSGRLGVLDASECPPTYGVSSEMVVGIIAGGERALRHPIEGAEDNTEQGKAALQAVNFSQKDVLVGIAASGRTPYVIGALEYAKSLGATTVSIASNPNSAMAQIAEIAIDTVVGPEILTGSSRMKSGTAQKLVLNMLTTASMVMIGKCYSNLMVDVQASNEKLKARAIKIVMEATECDRTVAENTLKIAENNAKLAIMMILSDSDKTTAEQLLSKHHGKLRQALVN.

The SIS domain occupies 62–225 (IVQAFQNGGR…TTASMVMIGK (164 aa)). The active-site Proton donor is E90. Residue E121 is part of the active site.

This sequence belongs to the GCKR-like family. MurNAc-6-P etherase subfamily. As to quaternary structure, homodimer.

It catalyses the reaction N-acetyl-D-muramate 6-phosphate + H2O = N-acetyl-D-glucosamine 6-phosphate + (R)-lactate. The protein operates within amino-sugar metabolism; 1,6-anhydro-N-acetylmuramate degradation. It functions in the pathway amino-sugar metabolism; N-acetylmuramate degradation. It participates in cell wall biogenesis; peptidoglycan recycling. Its function is as follows. Specifically catalyzes the cleavage of the D-lactyl ether substituent of MurNAc 6-phosphate, producing GlcNAc 6-phosphate and D-lactate. Together with AnmK, is also required for the utilization of anhydro-N-acetylmuramic acid (anhMurNAc) either imported from the medium or derived from its own cell wall murein, and thus plays a role in cell wall recycling. This Actinobacillus pleuropneumoniae serotype 7 (strain AP76) protein is N-acetylmuramic acid 6-phosphate etherase.